The primary structure comprises 335 residues: Thioredoxin-related transmembrane protein 4 (335 aa).

Positions 1–20 (MTGGFCVPVLLAAWLAAAAA) are cleaved as a signal peptide. Residues 26–133 (AALPAEESRV…YEDLQNYILE (108 aa)) enclose the Thioredoxin domain. Active-site nucleophile residues include C60 and C63. A disulfide bridge links C60 with C63. A helical transmembrane segment spans residues 186-206 (VFFVIATLVFGLFMGLILVVI). Positions 222 to 316 (CEQEQSTGEA…EDGAHPADTQ (95 aa)) are disordered. Positions 238-280 (QDAEEEKDDSNEEENKDSLVDDEEEKEDIGDEDEGEEDEEEDN) are enriched in acidic residues. Phosphoserine occurs at positions 247 and 255. Basic and acidic residues predominate over residues 286–298 (AEERSDTNERAVV).

It is found in the nucleus inner membrane. It localises to the endoplasmic reticulum membrane. The sequence is that of Thioredoxin-related transmembrane protein 4 (Tmx4) from Mus musculus (Mouse).